The sequence spans 1125 residues: Angiopoietin-1 receptor (1125 aa).

A signal peptide spans 1–22; it reads MDSLAGLVLCGVSLLLSATVDG. Residues 23 to 748 are Extracellular-facing; it reads AMDLILINSL…PADLGGRKML (726 aa). Residues Cys44 and Cys102 are joined by a disulfide bond. Residues 44–123 form the Ig-like C2-type 1 domain; the sequence is CIASGWRPHE…RTMKMRQQAS (80 aa). Asn158 carries an N-linked (GlcNAc...) asparagine glycan. EGF-like domains follow at residues 210–252, 254–299, and 301–341; these read RCEA…RTCE, ACEP…LQCN, and ACQP…LQCE. Disulfide bonds link Cys211–Cys220, Cys224–Cys233, Cys227–Cys240, Cys242–Cys251, Cys255–Cys264, Cys268–Cys274, Cys280–Cys287, Cys289–Cys298, Cys302–Cys311, Cys315–Cys323, Cys317–Cys329, Cys331–Cys340, and Cys370–Cys424. Residues 350–440 enclose the Ig-like C2-type 2 domain; the sequence is PKIEDLPDHI…GMVEKPFNIS (91 aa). Fibronectin type-III domains are found at residues 447-541, 545-637, and 642-735; these read PLNA…TASI, PPRG…TLSD, and QPEN…TLSE. The chain crosses the membrane as a helical span at residues 749–769; it reads LIAILGSAGMTCLTVLLAFLI. Topologically, residues 770-1125 are cytoplasmic; the sequence is MLQLKRANVQ…GIDCSAEEAA (356 aa). Residues 825-1097 form the Protein kinase domain; it reads IKFQDVIGEG…QILVSLNRML (273 aa). Residues 831–839 and Lys856 contribute to the ATP site; that span reads IGEGNFGQV. Tyr861 bears the Phosphotyrosine; by autocatalysis mark. Asp965 functions as the Proton acceptor in the catalytic mechanism. 3 positions are modified to phosphotyrosine; by autocatalysis: Tyr993, Tyr1103, and Tyr1109.

Belongs to the protein kinase superfamily. Tyr protein kinase family. Tie subfamily. As to quaternary structure, homodimer. Heterodimer with TIE1. Interacts with ANGPT1, ANGPT2 and ANGPT4. At cell-cell contacts in quiescent cells, forms a signaling complex composed of ANGPT1 plus TEK molecules from two adjoining cells. In the absence of endothelial cell-cell contacts, interaction with ANGPT1 mediates contacts with the extracellular matrix. Interacts (tyrosine phosphorylated) with TNIP2. Interacts (tyrosine phosphorylated) with SHC1 (via SH2 domain). Interacts with PTPRB; this promotes endothelial cell-cell adhesion. Interacts with DOK2, GRB2, GRB7, GRB14, PIK3R1 and PTPN11/SHP2. Colocalizes with DOK2 at contacts with the extracellular matrix in migrating cells. Proteolytic processing leads to the shedding of the extracellular domain (soluble TIE-2 alias sTIE-2). In terms of processing, autophosphorylated on tyrosine residues in response to ligand binding. Autophosphorylation occurs in trans, i.e. one subunit of the dimeric receptor phosphorylates tyrosine residues on the other subunit. Autophosphorylation occurs in a sequential manner, where Tyr-993 in the kinase activation loop is phosphorylated first, followed by autophosphorylation at Tyr-1109 and at additional tyrosine residues. ANGPT1-induced phosphorylation is impaired during hypoxia, due to increased expression of ANGPT2. Phosphorylation is important for interaction with GRB14, PIK3R1 and PTPN11. Phosphorylation at Tyr-1103 is important for interaction with GRB2 and GRB7. Phosphorylation at Tyr-1109 is important for interaction with DOK2 and for coupling to downstream signal transduction pathways in endothelial cells. Dephosphorylated by PTPRB. Post-translationally, ubiquitinated. The phosphorylated receptor is ubiquitinated and internalized, leading to its degradation. Specifically expressed in developing vascular endothelial cells.

The protein localises to the cell membrane. It localises to the cell junction. Its subcellular location is the focal adhesion. It is found in the cytoplasm. The protein resides in the cytoskeleton. The protein localises to the secreted. The enzyme catalyses L-tyrosyl-[protein] + ATP = O-phospho-L-tyrosyl-[protein] + ADP + H(+). Angiopoietin binding leads to receptor dimerization and activation by autophosphorylation at Tyr-993 on the kinase activation loop. Tyrosine-protein kinase that acts as a cell-surface receptor for ANGPT1, ANGPT2 and ANGPT4 and regulates angiogenesis, endothelial cell survival, proliferation, migration, adhesion and cell spreading, reorganization of the actin cytoskeleton, but also maintenance of vascular quiescence. Has anti-inflammatory effects by preventing the leakage of pro-inflammatory plasma proteins and leukocytes from blood vessels. Required for normal angiogenesis and heart development during embryogenesis. Required for post-natal hematopoiesis. After birth, activates or inhibits angiogenesis, depending on the context. Inhibits angiogenesis and promotes vascular stability in quiescent vessels, where endothelial cells have tight contacts. In quiescent vessels, ANGPT1 oligomers recruit TEK to cell-cell contacts, forming complexes with TEK molecules from adjoining cells, and this leads to preferential activation of phosphatidylinositol 3-kinase and the AKT1 signaling cascades. In migrating endothelial cells that lack cell-cell adhesions, ANGT1 recruits TEK to contacts with the extracellular matrix, leading to the formation of focal adhesion complexes, activation of PTK2/FAK and of the downstream kinases MAPK1/ERK2 and MAPK3/ERK1, and ultimately to the stimulation of sprouting angiogenesis. ANGPT1 signaling triggers receptor dimerization and autophosphorylation at specific tyrosine residues that then serve as binding sites for scaffold proteins and effectors. Signaling is modulated by ANGPT2 that has lower affinity for TEK, can promote TEK autophosphorylation in the absence of ANGPT1, but inhibits ANGPT1-mediated signaling by competing for the same binding site. Signaling is also modulated by formation of heterodimers with TIE1, and by proteolytic processing that gives rise to a soluble TEK extracellular domain. The soluble extracellular domain modulates signaling by functioning as decoy receptor for angiopoietins. TEK phosphorylates DOK2, GRB7, GRB14, PIK3R1, SHC1 and TIE1. This Bos taurus (Bovine) protein is Angiopoietin-1 receptor (TEK).